The chain runs to 144 residues: 3-hydroxyacyl-[acyl-carrier-protein] dehydratase FabZ (144 aa).

Histidine 48 is a catalytic residue.

The protein belongs to the thioester dehydratase family. FabZ subfamily.

It is found in the cytoplasm. The enzyme catalyses a (3R)-hydroxyacyl-[ACP] = a (2E)-enoyl-[ACP] + H2O. Involved in unsaturated fatty acids biosynthesis. Catalyzes the dehydration of short chain beta-hydroxyacyl-ACPs and long chain saturated and unsaturated beta-hydroxyacyl-ACPs. The chain is 3-hydroxyacyl-[acyl-carrier-protein] dehydratase FabZ from Chloroflexus aggregans (strain MD-66 / DSM 9485).